The following is a 310-amino-acid chain: Isoflavone reductase homolog A622 (310 aa).

NADP(+) contacts are provided by residues 13–19 (GGTGYIG), R38, and K47. K135 acts as the Proton acceptor in catalysis. R139 is an NADP(+) binding site.

This sequence belongs to the NmrA-type oxidoreductase family. Isoflavone reductase subfamily. In terms of assembly, monomer.

The protein localises to the cytoplasm. It participates in alkaloid biosynthesis; nicotine biosynthesis. Functionally, NADPH-binding protein. Involved in the biosynthesis of pyridine alkaloid natural products, leading mainly to the production of anabasine, anatabine, nicotine and nornicotine, effective deterrents against herbivores with antiparasitic and pesticide properties (neurotoxins); nornicotine serves as the precursor in the synthesis of the carcinogen compound N'-nitrosonornicotine (NNN). Reductase involved in a late step of tobacco alkaloid biosynthesis. Triggers either the formation of a nicotinic acid-derived precursor or the final condensation reaction of tobacco alkaloids. This chain is Isoflavone reductase homolog A622, found in Nicotiana glauca (Glaucous tobacco).